The chain runs to 110 residues: Prothymosin alpha (110 aa).

Position 1 is an N-acetylmethionine (M1). The disordered stretch occupies residues 1–110 (MSDAAVDTSS…TKKQKTDEDD (110 aa)). An N-acetylserine; in Prothymosin alpha, N-terminally processed modification is found at S2. The residue at position 2 (S2) is a Phosphoserine. Residue T8 is modified to Phosphothreonine. Residues S9 and S10 each carry the phosphoserine modification. Residues T13 and T14 each carry the phosphothreonine modification. Basic and acidic residues predominate over residues 13–31 (TTKDLKEKKEVVEEAENGR). Position 15 is an N6-acetyllysine; alternate (K15). The residue at position 15 (K15) is an N6-succinyllysine; alternate. Acidic residues predominate over residues 42-83 (ENGEQEADNEVDEEEEEGGEEEEEEEEGDGEEEDGDEDEEAE). Positions 100–110 (DTKKQKTDEDD) are enriched in basic and acidic residues. Residue T101 is modified to Phosphothreonine. K102 bears the N6-acetyllysine; alternate mark. A Glycyl lysine isopeptide (Lys-Gly) (interchain with G-Cter in SUMO2); alternate cross-link involves residue K102. T106 carries the phosphothreonine modification.

Belongs to the pro/parathymosin family. In terms of assembly, interacts with NUPR1; regulates apoptotic process. Post-translationally, covalently linked to a small RNA of about 20 nucleotides.

It localises to the nucleus. Prothymosin alpha may mediate immune function by conferring resistance to certain opportunistic infections. The polypeptide is Prothymosin alpha (PTMA) (Pongo abelii (Sumatran orangutan)).